The chain runs to 65 residues: Large ribosomal subunit protein bL35 (65 aa).

The protein belongs to the bacterial ribosomal protein bL35 family.

In Prochlorococcus marinus (strain MIT 9215), this protein is Large ribosomal subunit protein bL35.